The primary structure comprises 407 residues: Actinorhodin polyketide putative beta-ketoacyl synthase 2 (407 aa).

The 402-residue stretch at Met1 to Arg402 folds into the Ketosynthase family 3 (KS3) domain.

The protein belongs to the thiolase-like superfamily. Beta-ketoacyl-ACP synthases family.

The protein is Actinorhodin polyketide putative beta-ketoacyl synthase 2 of Streptomyces coelicolor (strain ATCC BAA-471 / A3(2) / M145).